We begin with the raw amino-acid sequence, 132 residues long: uncharacterized protein (132 aa).

Lys59 participates in a covalent cross-link: Glycyl lysine isopeptide (Lys-Gly) (interchain with G-Cter in SAMP2).

This sequence belongs to the OsmC/Ohr family.

This is an uncharacterized protein from Haloferax volcanii (strain ATCC 29605 / DSM 3757 / JCM 8879 / NBRC 14742 / NCIMB 2012 / VKM B-1768 / DS2) (Halobacterium volcanii).